We begin with the raw amino-acid sequence, 87 residues long: Small ribosomal subunit protein bS18B (87 aa).

Belongs to the bacterial ribosomal protein bS18 family. In terms of assembly, part of the 30S ribosomal subunit. Forms a tight heterodimer with protein bS6.

Functionally, binds as a heterodimer with protein bS6 to the central domain of the 16S rRNA, where it helps stabilize the platform of the 30S subunit. The chain is Small ribosomal subunit protein bS18B from Mycolicibacterium vanbaalenii (strain DSM 7251 / JCM 13017 / BCRC 16820 / KCTC 9966 / NRRL B-24157 / PYR-1) (Mycobacterium vanbaalenii).